A 162-amino-acid polypeptide reads, in one-letter code: NADH-quinone oxidoreductase subunit I 2 (162 aa).

4Fe-4S ferredoxin-type domains follow at residues 52 to 82 and 93 to 122; these read LRRY…IEAG and VRYD…EGPN. Residues cysteine 62, cysteine 65, cysteine 68, cysteine 72, cysteine 102, cysteine 105, cysteine 108, and cysteine 112 each coordinate [4Fe-4S] cluster.

The protein belongs to the complex I 23 kDa subunit family. As to quaternary structure, NDH-1 is composed of 14 different subunits. Subunits NuoA, H, J, K, L, M, N constitute the membrane sector of the complex. It depends on [4Fe-4S] cluster as a cofactor.

Its subcellular location is the cell inner membrane. It carries out the reaction a quinone + NADH + 5 H(+)(in) = a quinol + NAD(+) + 4 H(+)(out). In terms of biological role, NDH-1 shuttles electrons from NADH, via FMN and iron-sulfur (Fe-S) centers, to quinones in the respiratory chain. The immediate electron acceptor for the enzyme in this species is believed to be ubiquinone. Couples the redox reaction to proton translocation (for every two electrons transferred, four hydrogen ions are translocated across the cytoplasmic membrane), and thus conserves the redox energy in a proton gradient. The polypeptide is NADH-quinone oxidoreductase subunit I 2 (Rhodopseudomonas palustris (strain HaA2)).